The following is a 608-amino-acid chain: Dihydroxy-acid dehydratase, chloroplastic (608 aa).

Residues 1–34 (MQATIFSPRATLFPCKPLLPSHNVNSRRPSIISC) constitute a chloroplast transit peptide. Residue serine 35 is modified to N-acetylserine. Cysteine 100 is a [2Fe-2S] cluster binding site. Aspartate 132 lines the Mg(2+) pocket. Cysteine 173 serves as a coordination point for [2Fe-2S] cluster. Aspartate 174 is a binding site for Mg(2+). A [2Fe-2S] cluster-binding site is contributed by cysteine 245. Glutamate 497 serves as a coordination point for Mg(2+). Serine 523 serves as the catalytic Proton acceptor.

Belongs to the IlvD/Edd family. It depends on [2Fe-2S] cluster as a cofactor. The cofactor is Mg(2+).

The protein localises to the plastid. It localises to the chloroplast. The enzyme catalyses (2R)-2,3-dihydroxy-3-methylbutanoate = 3-methyl-2-oxobutanoate + H2O. It catalyses the reaction (2R,3R)-2,3-dihydroxy-3-methylpentanoate = (S)-3-methyl-2-oxopentanoate + H2O. It participates in amino-acid biosynthesis; L-isoleucine biosynthesis; L-isoleucine from 2-oxobutanoate: step 3/4. It functions in the pathway amino-acid biosynthesis; L-valine biosynthesis; L-valine from pyruvate: step 3/4. Is highly competitively inhibited by the fungal sesquiterpenoid aspterric acid, which is effective as a herbicide in spray applications. Its function is as follows. Functions in the biosynthesis of branched-chain amino acids. Catalyzes the dehydration of (2R,3R)-2,3-dihydroxy-3-methylpentanoate (2,3-dihydroxy-3-methylvalerate) into 2-oxo-3-methylpentanoate (2-oxo-3-methylvalerate) and of (2R)-2,3-dihydroxy-3-methylbutanoate (2,3-dihydroxyisovalerate) into 2-oxo-3-methylbutanoate (2-oxoisovalerate), the penultimate precursor to L-isoleucine and L-valine, respectively. In Arabidopsis thaliana (Mouse-ear cress), this protein is Dihydroxy-acid dehydratase, chloroplastic.